Reading from the N-terminus, the 533-residue chain is Beta-1,4-mannosyl-glycoprotein 4-beta-N-acetylglucosaminyltransferase (533 aa).

Residues 1–7 (MKMRRYK) are Cytoplasmic-facing. Residues 8–23 (LFLMFCMAGLCLISFL) traverse the membrane as a helical; Signal-anchor for type II membrane protein segment. Over 24 to 533 (HFFKTLSYVT…ARGKLDEAEV (510 aa)) the chain is Lumenal. Positions 119–158 (KPGTKMLERPPPGRPEEKPEGANGSSARRPPRYLLSARER) are disordered. N-linked (GlcNAc...) asparagine glycans are attached at residues Asn-141, Asn-241, Asn-259, and Asn-397. The interval 507-533 (STAAGGWRHRGPEGRPPARGKLDEAEV) is disordered.

Belongs to the glycosyltransferase 17 family. In terms of assembly, interacts with MGAT4D.

It is found in the golgi apparatus membrane. The enzyme catalyses N(4)-{beta-D-GlcNAc-(1-&gt;2)-alpha-D-Man-(1-&gt;3)-[beta-D-GlcNAc-(1-&gt;2)-alpha-D-Man-(1-&gt;6)]-beta-D-Man-(1-&gt;4)-beta-D-GlcNAc-(1-&gt;4)-beta-D-GlcNAc}-L-asparaginyl-[protein] + UDP-N-acetyl-alpha-D-glucosamine = N(4)-{beta-D-GlcNAc-(1-&gt;2)-alpha-D-Man-(1-&gt;3)-[beta-D-GlcNAc-(1-&gt;4)]-[beta-D-GlcNAc-(1-&gt;2)-alpha-D-Man-(1-&gt;6)]-beta-D-Man-(1-&gt;4)-beta-D-GlcNAc-(1-&gt;4)-beta-D-GlcNAc}-L-asparaginyl-[protein] + UDP + H(+). It functions in the pathway protein modification; protein glycosylation. Its function is as follows. It is involved in the regulation of the biosynthesis and biological function of glycoprotein oligosaccharides. Catalyzes the addition of N-acetylglucosamine in beta 1-4 linkage to the beta-linked mannose of the trimannosyl core of N-linked sugar chains, called bisecting N-acetylglucosamine (GlcNAc). It is one of the most important enzymes involved in the regulation of the biosynthesis of glycoprotein oligosaccharides. The addition of this bisecting GlcNAc residue alters not only the composition, but also the conformation of the N-glycan. The introduction of the bisecting GlcNAc residue results in the suppression of further processing and elongation of N-glycans, precluding the formation of beta-1,6 GlcNAc branching, catalyzed by MGAT5 since it is unable to use the bisected oligosaccharide as a substrate. Addition of bisecting N-acetylglucosamine to CDH1/E-cadherin modulates CDH1 cell membrane location. Inhibits NeuAc-alpha-2,3-Gal-beta-1,4-GlcNAc- formation which modulates sialylation levels and plays a role in cell migration regulation. In brain, addition of bisecting N-acetylglucosamine to BACE1 blocks its lysosomal targeting in response to oxidative stress and further degradation which increases its location to early endosome and the APP cleavage. The sequence is that of Beta-1,4-mannosyl-glycoprotein 4-beta-N-acetylglucosaminyltransferase from Homo sapiens (Human).